An 86-amino-acid chain; its full sequence is Large ribosomal subunit protein bL31B (86 aa).

The protein belongs to the bacterial ribosomal protein bL31 family. Type B subfamily. Part of the 50S ribosomal subunit.

This is Large ribosomal subunit protein bL31B from Streptococcus agalactiae serotype Ia (strain ATCC 27591 / A909 / CDC SS700).